The chain runs to 183 residues: MSHTDLTPCTRVLASSGTVPIAEELLARVLEPYSCKGCRYLIDAQYSATEDSVLAYGNFTIGESAYIRSTGHFNAVELILCFNQLAYSAFAPAVLNEEIRVLRGWSIDDYCQHQLSSMLIRKASSRFRKPLNPQKFSARLLCRDLQVIERTWRYLKVPCVIEFWDENGGAASGEIELAALNIP.

Belongs to the FcoT family.

The catalysed reaction is a (3R)-3-[(carboxymethyl)amino]fatty acid + holo-[ACP] + H(+) = a (2E)-enoyl-[ACP] + glycine + H2O. The enzyme catalyses (3R)-3-[(carboxylmethyl)amino]decanoate + holo-[ACP] + H(+) = (2E)-decenoyl-[ACP] + glycine + H2O. It catalyses the reaction a fatty acyl-CoA + H2O = a fatty acid + CoA + H(+). Its function is as follows. Involved in the biosynthesis of a unique class of isonitrile lipopeptides (INLPs) that seem to play a role in metal acquisition. Catalyzes a Michael addition of glycine to the beta-position of an alpha,beta-unsaturated fatty acyl-[ACP], producing a (3R)-3-[(carboxymethyl)amino]fatty acid. Acts on the (2E)-decenoyl moiety loaded on the acyl-carrier protein (ACP) BQ2027_MB0103, forming the product (3R)-3-[(carboxymethyl)amino]decanoate released from the ACP. Displays thioesterase activity with a preference for long chain fatty acyl groups. This chain is (2E)-enoyl-[ACP] glycyltransferase, found in Mycobacterium bovis (strain ATCC BAA-935 / AF2122/97).